A 156-amino-acid polypeptide reads, in one-letter code: Small ribosomal subunit protein uS7 (156 aa).

Belongs to the universal ribosomal protein uS7 family. As to quaternary structure, part of the 30S ribosomal subunit. Contacts proteins S9 and S11.

Functionally, one of the primary rRNA binding proteins, it binds directly to 16S rRNA where it nucleates assembly of the head domain of the 30S subunit. Is located at the subunit interface close to the decoding center, probably blocks exit of the E-site tRNA. The polypeptide is Small ribosomal subunit protein uS7 (Marinobacter nauticus (strain ATCC 700491 / DSM 11845 / VT8) (Marinobacter aquaeolei)).